The following is a 105-amino-acid chain: Putative membrane protein insertion efficiency factor (105 aa).

It belongs to the UPF0161 family.

The protein localises to the cell membrane. Its function is as follows. Could be involved in insertion of integral membrane proteins into the membrane. The protein is Putative membrane protein insertion efficiency factor of Bifidobacterium longum (strain NCC 2705).